The chain runs to 443 residues: Maintenance of mitochondrial morphology protein 1 (443 aa).

Residues 1–80 lie on the Lumenal side of the membrane; it reads MADLETSDLS…PSNTWSFTQG (80 aa). Residues 81 to 101 traverse the membrane as a helical segment; the sequence is LIVGQLSVVFVIVIFIKFFVF. Residues 102–443 lie on the Cytoplasmic side of the membrane; sequence AESSPALAKS…NGDKVEDGSN (342 aa). Disordered stretches follow at residues 126 to 146 and 304 to 358; these read KKDQ…TTAS and LSAH…NDGT. The segment covering 131–142 has biased composition (acidic residues); the sequence is SSDDADPDDDSE. The SMP-LTD domain occupies 165-417; that stretch reads SPESLDWFNV…EPRFQVVRLP (253 aa).

This sequence belongs to the MMM1 family. As to quaternary structure, homodimer. Component of the ER-mitochondria encounter structure (ERMES) or MDM complex, composed of MMM1, MDM10, MDM12 and MDM34. An MMM1 homodimer associates with one molecule of MDM12 on each side in a pairwise head-to-tail manner, and the SMP-LTD domains of MMM1 and MDM12 generate a continuous hydrophobic tunnel for phospholipid trafficking.

Its subcellular location is the endoplasmic reticulum membrane. In terms of biological role, component of the ERMES/MDM complex, which serves as a molecular tether to connect the endoplasmic reticulum (ER) and mitochondria. Components of this complex are involved in the control of mitochondrial shape and protein biogenesis, and function in nonvesicular lipid trafficking between the ER and mitochondria. The MDM12-MMM1 subcomplex functions in the major beta-barrel assembly pathway that is responsible for biogenesis of all outer membrane beta-barrel proteins, and acts in a late step after the SAM complex. The MDM10-MDM12-MMM1 subcomplex further acts in the TOM40-specific pathway after the action of the MDM12-MMM1 complex. Essential for establishing and maintaining the structure of mitochondria and maintenance of mtDNA nucleoids. In Scheffersomyces stipitis (strain ATCC 58785 / CBS 6054 / NBRC 10063 / NRRL Y-11545) (Yeast), this protein is Maintenance of mitochondrial morphology protein 1.